Here is a 342-residue protein sequence, read N- to C-terminus: Cell cycle control protein 50C (342 aa).

At 1–33 the chain is on the cytoplasmic side; that stretch reads MEMMPQYDLSRLPENTALKQQTLPTQQLNLSAS. The chain crosses the membrane as a helical span at residues 34-54; the sequence is VVLSIFFITGGFCLSIGIILL. Topologically, residues 55-306 are extracellular; the sequence is LSAKSTKKIE…STLTWIGGGG (252 aa). N-linked (GlcNAc...) asparagine glycans are attached at residues Asn-66, Asn-80, Asn-89, and Asn-205. A helical membrane pass occupies residues 307 to 327; it reads LFLGLTYTVTGALTLLASFAI. Topologically, residues 328-342 are cytoplasmic; sequence LTIHLMLKRSKLNFL.

It belongs to the CDC50/LEM3 family. Specifically expressed in testis.

The protein localises to the membrane. The polypeptide is Cell cycle control protein 50C (Tmem30c) (Mus musculus (Mouse)).